Reading from the N-terminus, the 475-residue chain is ATP synthase subunit beta (475 aa).

An ATP-binding site is contributed by 152 to 159 (GGAGVGKT).

It belongs to the ATPase alpha/beta chains family. As to quaternary structure, F-type ATPases have 2 components, CF(1) - the catalytic core - and CF(0) - the membrane proton channel. CF(1) has five subunits: alpha(3), beta(3), gamma(1), delta(1), epsilon(1). CF(0) has three main subunits: a(1), b(2) and c(9-12). The alpha and beta chains form an alternating ring which encloses part of the gamma chain. CF(1) is attached to CF(0) by a central stalk formed by the gamma and epsilon chains, while a peripheral stalk is formed by the delta and b chains.

Its subcellular location is the cell inner membrane. The catalysed reaction is ATP + H2O + 4 H(+)(in) = ADP + phosphate + 5 H(+)(out). Functionally, produces ATP from ADP in the presence of a proton gradient across the membrane. The catalytic sites are hosted primarily by the beta subunits. The polypeptide is ATP synthase subunit beta (Wolbachia sp. subsp. Drosophila simulans (strain wRi)).